Here is a 100-residue protein sequence, read N- to C-terminus: Probable DNA-binding protein HU (100 aa).

This sequence belongs to the bacterial histone-like protein family.

Histone-like DNA-binding protein which is capable of wrapping DNA to stabilize it, and thus to prevent its denaturation under extreme environmental conditions. The sequence is that of Probable DNA-binding protein HU (hup) from Chlamydia muridarum (strain MoPn / Nigg).